The following is a 755-amino-acid chain: Periplasmic nitrate reductase (755 aa).

Positions 1–32 form a signal peptide, tat-type signal; that stretch reads MSTSRRDFLKYFAMSAAVAAASGAGFGSLALA. Positions 38 to 93 constitute a 4Fe-4S Mo/W bis-MGD-type domain; the sequence is EKWVKGVCRYCGTGCGVLVGVKDGKAVAIQGDPNNHNAGLLCLKGSLLIPVLNSKE. Residues C45, C48, C52, and C79 each coordinate [4Fe-4S] cluster. Mo-bis(molybdopterin guanine dinucleotide) contacts are provided by residues K81, Q143, N168, C172, 208–212, 236–238, 255–257, M340, Q344, N450, 475–477, and 647–656; these read NTSEA, DPR, GTD, IEA, and SMRVIDHWHT. Substrate is bound by residues 648-653 and F721; that span reads MRVIDH. 2 residues coordinate Mo-bis(molybdopterin guanine dinucleotide): N729 and K746.

It belongs to the prokaryotic molybdopterin-containing oxidoreductase family. NasA/NapA/NarB subfamily. As to quaternary structure, monomer. Component of the periplasmic nitrate reductase NapAB complex composed of NapA and NapB. Requires [4Fe-4S] cluster as cofactor. Mo-bis(molybdopterin guanine dinucleotide) is required as a cofactor. Post-translationally, predicted to be exported by the Tat system. The position of the signal peptide cleavage has been experimentally proven.

Its subcellular location is the periplasm. The catalysed reaction is 2 Fe(II)-[cytochrome] + nitrate + 2 H(+) = 2 Fe(III)-[cytochrome] + nitrite + H2O. Its activity is regulated as follows. Activated by potassium and sodium ions and inhibited by magnesium and calcium ions. Its function is as follows. Catalytic subunit of the periplasmic nitrate reductase complex NapAB. Receives electrons from NapB and catalyzes the reduction of nitrate to nitrite. The protein is Periplasmic nitrate reductase of Desulfovibrio desulfuricans (strain ATCC 27774 / DSM 6949 / MB).